The primary structure comprises 134 residues: Submaxillary gland androgen-regulated protein 3A (134 aa).

Residues 1–22 (MKSLTWILGLWALAACFTPGES) form the signal peptide. Positions 19–134 (PGESQRGPRG…TDPALPTPAP (116 aa)) are disordered. 3 stretches are compositionally biased toward pro residues: residues 28–43 (GPYP…PPCF), 50–85 (VPPP…PPYG), and 94–119 (LPPP…PPFF).

Belongs to the PROL1/PROL3 family.

The protein localises to the secreted. May play a role in protection or detoxification. In Homo sapiens (Human), this protein is Submaxillary gland androgen-regulated protein 3A (SMR3A).